Reading from the N-terminus, the 520-residue chain is 2-isopropylmalate synthase (520 aa).

Residues 5–267 form the Pyruvate carboxyltransferase domain; that stretch reads VIIFDTTLRD…HTNINHQEIY (263 aa). The Mn(2+) site is built by aspartate 14, histidine 202, histidine 204, and asparagine 238. The interval 392-520 is regulatory domain; the sequence is RLDYFSVQSG…RLQQNNQEMV (129 aa).

Belongs to the alpha-IPM synthase/homocitrate synthase family. LeuA type 1 subfamily. As to quaternary structure, homodimer. Mn(2+) serves as cofactor.

It is found in the cytoplasm. The enzyme catalyses 3-methyl-2-oxobutanoate + acetyl-CoA + H2O = (2S)-2-isopropylmalate + CoA + H(+). It functions in the pathway amino-acid biosynthesis; L-leucine biosynthesis; L-leucine from 3-methyl-2-oxobutanoate: step 1/4. In terms of biological role, catalyzes the condensation of the acetyl group of acetyl-CoA with 3-methyl-2-oxobutanoate (2-ketoisovalerate) to form 3-carboxy-3-hydroxy-4-methylpentanoate (2-isopropylmalate). The polypeptide is 2-isopropylmalate synthase (Yersinia pseudotuberculosis serotype O:1b (strain IP 31758)).